We begin with the raw amino-acid sequence, 140 residues long: Odorant-binding protein 10 (140 aa).

The N-terminal stretch at Met-1–Ser-25 is a signal peptide.

Belongs to the PBP/GOBP family. As to expression, high-level expression in female mouth parts, particularly in the proboscis (at protein level). Low-level expression in female antenna (at protein level). Female salivary gland. Female chemosensory organs: antenna, palp and proboscis. Male antenna, wing and maxillary palp. Expressed at higher levels in male tissues compared to female tissues. Not detected in midgut.

Its subcellular location is the secreted. Its function is as follows. Involved in modulation of blood-feeding behavior and capacity in female mosquitoes. Required for normal oviposition. Required for normal fecundity and fertility of female mosquitoes. Required for normal expression of VGA1 gene, which encodes the egg yolk protein vitellogenin-A1. Required for normal female longevity when mosquitoes are maintained on regular sugar meal. (Microbial infection) Facilitates shedding of dengue virus type 2 particles into mosquito saliva. Does not affect dengue virus type 2 replication or infection prevalence in midgut and salivary glands at 14 days after blood feeding. Functionally, (Microbial infection) Facilitates shedding of Zika virus particles into mosquito saliva. Does not affect Zika virus replication or infection prevalence in midgut and salivary glands at 14 days after blood feeding. This is Odorant-binding protein 10 from Aedes aegypti (Yellowfever mosquito).